The primary structure comprises 453 residues: MLINPKEILETIQMVRMEHLDIRTVTMGISLRDCSHPDIEIFNENIYAKITSRAKDLVRTTNEIQSLYGIPIINRRISVTPIAIAAESCRSRDFVSIAKTMDEAAKEAGVDFIGGFSALVHKGETGGDLKLINSIPEALASTEKVCSSVNVATTKAGINMDAVGLMGKVIKKTAELTSDRDGIGCAKLVVFANAPDDNPFMAGAFHGIGEPECVINVGVSGPGVVNAAVCELENPDLTEISETIKRTAFKITRMGEMVGREVSRRLGVEFGILDLSLAPTPAIGDSVAAILEAMGLERCGAHGTTAALALLNDAVKKGGAMASSSVGGLSGAFIPVSEDAGMIEAVKAGALSLEKLEAMTCVCSVGLDMIAVPGDTPATTLSAIIADEMAIGVINKKTTAVRVIPAPGKEVGDSVEFGGLLGSAPVMPVSNFSSETFIKRGGRIPAPIQSLTN.

It belongs to the UPF0210 family.

In Methanosarcina mazei (strain ATCC BAA-159 / DSM 3647 / Goe1 / Go1 / JCM 11833 / OCM 88) (Methanosarcina frisia), this protein is UPF0210 protein MM_0081.